The sequence spans 219 residues: MNNQNEDTEGGRNCCTCCLSFIFTAGLTSLFLWLSLRADKPKCSIQNFFIPALGKDPNSRDNTTLNFMVRCDNPNKDKGIYYDDVHLNFSTINTTKINSSALVLVGNYTVPKFYQGHKKKAKKWGQVKPLNNQTVLRAVLPNGSAVFRLDLKTQVRFKIVFWKTKRYGVEVGADVEVNGDGVKAQKKGIKMKKSDSSFPLRSSFPISVLMNLLVFFAIR.

Positions 1–38 (MNNQNEDTEGGRNCCTCCLSFIFTAGLTSLFLWLSLRA) are cleaved as a signal peptide. 7 N-linked (GlcNAc...) asparagine glycosylation sites follow: Asn62, Asn88, Asn93, Asn98, Asn107, Asn132, and Asn142. Asp195 carries the GPI-anchor amidated aspartate lipid modification. Residues 196–219 (SSFPLRSSFPISVLMNLLVFFAIR) constitute a propeptide, removed in mature form.

Interacts with RIN4 (via C-terminus). In terms of processing, N-glycosylated.

The protein localises to the cell membrane. Its function is as follows. Involved in disease resistance. Required for resistance conferred by multiple R genes recognizing different bacterial and oomycete pathogen isolates like avirulent P.syringae or H.parasitica (downy mildew). Required for the establishment of hypersensitive response (HR) and systemic acquired resistance (SAR) after infection with the bacterial pathogen P.syringae DC3000 carrying avrRpt2. Required for resistance to the soilborne fungus V.longisporum. Interaction with RIN4 is required for the activation of the R gene RPS2 and RPS2-mediated resistance. The sequence is that of Protein NDR1 (NDR1) from Arabidopsis thaliana (Mouse-ear cress).